Reading from the N-terminus, the 252-residue chain is Probable anguibactin biosynthesis thioesterase AngT (252 aa).

Catalysis depends on residues Ser92 and His229.

The protein belongs to the thioesterase family.

It functions in the pathway siderophore biosynthesis; anguibactin biosynthesis. Functionally, probable thioesterase. Involved in anguibactin production, but is not essential for virulence or iron transport gene expression. This Vibrio anguillarum (strain ATCC 68554 / 775) (Listonella anguillarum) protein is Probable anguibactin biosynthesis thioesterase AngT (angT).